A 355-amino-acid polypeptide reads, in one-letter code: 3-dehydroquinate synthase (355 aa).

NAD(+) is bound by residues 71–76, 105–109, 129–130, K142, K151, and 169–172; these read EGEASK, GVVGD, TS, and TLNT. Residues E184, H246, and H263 each coordinate Zn(2+).

The protein belongs to the sugar phosphate cyclases superfamily. Dehydroquinate synthase family. NAD(+) serves as cofactor. Co(2+) is required as a cofactor. Requires Zn(2+) as cofactor.

It localises to the cytoplasm. It carries out the reaction 7-phospho-2-dehydro-3-deoxy-D-arabino-heptonate = 3-dehydroquinate + phosphate. It participates in metabolic intermediate biosynthesis; chorismate biosynthesis; chorismate from D-erythrose 4-phosphate and phosphoenolpyruvate: step 2/7. Catalyzes the conversion of 3-deoxy-D-arabino-heptulosonate 7-phosphate (DAHP) to dehydroquinate (DHQ). The polypeptide is 3-dehydroquinate synthase (Streptococcus mutans serotype c (strain ATCC 700610 / UA159)).